A 504-amino-acid polypeptide reads, in one-letter code: MSKDNKKAGIEPKVFFPPLIIVGILCWLTVRDLDASNEVINAVFSYVTNVWGWAFEWYMVIMFGGWFWLVFGRYAKKRLGDEKPEFSTASWIFMMFASCTSAAVLFWGSIEIYYYISSPPFGMEGYSAPAKEIGLAYSLFHWGPLPWATYSFLSVAFAYFFFVRKMEVIRPSSTLTPLVGEKHVNGLFGTVVDNFYLVALILAMGTSLGLATPLVTECIQYLFGIPHTLQLDAIIISCWILLNAICVAFGLQKGVKIASDVRTYLSFLMLGWVFIVGGASFIVNYFTDSVGTLLMYMPRMLFYTDPIGKGGFPQAWTVFYWAWWVIYAIQMSIFLARISKGRTVRELCLGMVSGLTAGTWLIWTYSGGNTLQLIDQNILNIPQLIDQYGVPRAIIETWAALPLSTATMWGFFILCFIATVTLINACSYTLAMSTCRSMKEGAEPPLLVRIGWSVLVGIIGIILLALGGLKPIQTAIIAGGCPLFFVNIMVTLSFIKDAKVHWKD.

The next 12 membrane-spanning stretches (helical) occupy residues 8–28 (AGIE…LCWL), 51–71 (WGWA…WLVF), 92–112 (IFMM…SIEI), 143–163 (GPLP…FFFV), 195–215 (FYLV…TPLV), 231–251 (LDAI…AFGL), 263–283 (TYLS…SFIV), 315–335 (AWTV…SIFL), 347–367 (LCLG…TYSG), 403–423 (LSTA…VTLI), 446–466 (LLVR…LLAL), and 475–495 (AIIA…LSFI).

Belongs to the BCCT transporter (TC 2.A.15) family. CaiT subfamily. In terms of assembly, homotrimer.

The protein resides in the cell inner membrane. It carries out the reaction 4-(trimethylamino)butanoate(in) + (R)-carnitine(out) = 4-(trimethylamino)butanoate(out) + (R)-carnitine(in). Its pathway is amine and polyamine metabolism; carnitine metabolism. Its function is as follows. Catalyzes the exchange of L-carnitine for gamma-butyrobetaine. The chain is L-carnitine/gamma-butyrobetaine antiporter from Proteus sp. (strain LE138).